A 103-amino-acid chain; its full sequence is Potassium voltage-gated channel subfamily E member 3 (103 aa).

3 N-linked (GlcNAc...) asparagine glycosylation sites follow: asparagine 5, asparagine 22, and asparagine 41. The segment at 32 to 53 (RPGPGLGPDNQTEERRASLPGR) is disordered. Residues 43–53 (TEERRASLPGR) are compositionally biased toward basic and acidic residues. A helical membrane pass occupies residues 57–77 (SYMYILFVMFLFAVTVGSLIL). The segment at 68-79 (FAVTVGSLILGY) is interaction with KCNQ1. Residues 78–103 (GYTRSRKVDKRSDPYHVYIKNRVSMI) lie on the Cytoplasmic side of the membrane.

It belongs to the potassium channel KCNE family. In terms of assembly, interacts with KCNB1. Interacts with KCNC2. Associates with KCNC4/Kv3.4. Interacts with KCNQ1; associates with a KCNQ1:KCNE3 stoichiometry of 4:4; produces a current with nearly instantaneous activation with a linear current-voltage relationship and alters membrane raft localization; affects KCNQ1 structure and gating properties. Expressed in hippocampal neurons (at protein level). Widely expressed with highest levels in kidney and moderate levels in small intestine.

It localises to the cell membrane. It is found in the cytoplasm. Its subcellular location is the perikaryon. The protein localises to the cell projection. The protein resides in the dendrite. It localises to the membrane raft. Its function is as follows. Ancillary protein that functions as a regulatory subunit of the voltage-gated potassium (Kv) channel complex composed of pore-forming and potassium-conducting alpha subunits and of regulatory beta subunits. KCNE3 beta subunit modulates the gating kinetics and enhances stability of the channel complex. Alters the gating of the delayed rectifier Kv channel containing KCNB1 alpha subunit. Associates with KCNC4/Kv3.4 alpha subunit to form the subthreshold Kv channel in skeletal muscle and to establish the resting membrane potential (RMP) in muscle cells. Association with KCNQ1/KCLQT1 alpha subunit may form the intestinal cAMP-stimulated potassium channel involved in chloride secretion that produces a current with nearly instantaneous activation with a linear current-voltage relationship. This is Potassium voltage-gated channel subfamily E member 3 from Homo sapiens (Human).